The primary structure comprises 46 residues: Photosystem II reaction center protein K (46 aa).

Positions 1-9 (MLILLNTFA) are excised as a propeptide. A helical transmembrane segment spans residues 25–45 (LPLIPLFFFLLVFVWQAAVGF).

It belongs to the PsbK family. PSII is composed of 1 copy each of membrane proteins PsbA, PsbB, PsbC, PsbD, PsbE, PsbF, PsbH, PsbI, PsbJ, PsbK, PsbL, PsbM, PsbT, PsbX, PsbY, Psb30/Ycf12, peripheral proteins PsbO, CyanoQ (PsbQ), PsbU, PsbV and a large number of cofactors. It forms dimeric complexes.

The protein resides in the cellular thylakoid membrane. Functionally, one of the components of the core complex of photosystem II (PSII). PSII is a light-driven water:plastoquinone oxidoreductase that uses light energy to abstract electrons from H(2)O, generating O(2) and a proton gradient subsequently used for ATP formation. It consists of a core antenna complex that captures photons, and an electron transfer chain that converts photonic excitation into a charge separation. The chain is Photosystem II reaction center protein K from Prochlorococcus marinus (strain MIT 9215).